The following is a 149-amino-acid chain: 18 kDa antigen 1 (149 aa).

The sHSP domain occupies 21–131 (TAARPAVMPM…KPRKIAVGRG (111 aa)).

The protein belongs to the small heat shock protein (HSP20) family.

Not known. This protein is one of the major immune reactive proteins in mycobacteria. The chain is 18 kDa antigen 1 from Mycobacterium intracellulare.